Reading from the N-terminus, the 310-residue chain is MVKVYAPASSANMSVGFDVLGAAVAPVDGALLGDVVTVEAAETFSLNNLGRFADKLPSEPRENIVYQCWERFCQELGKQIPVAMTLEKNMPIGSGLGSSACSVVAALMAMNEHCGKPLNDTRLLALMGELEGRISGSIHYDNVAPCFLGGMQLMIEENDIISQQVPGFDEWLWVLAYPGIKVSTAEARAILPAQYRRQDCIAHGRHLAGFIHACYSRQPELAAKLMKDVIAEPYRERLLPGFRQARQAVAEIGAVASGISGSGPTLFALCDKPDTAQRVADWLGKNYLQNQEGFVHICRLDTAGARVLEN.

ATP is bound at residue 91–101; it reads PIGSGLGSSAC.

The protein belongs to the GHMP kinase family. Homoserine kinase subfamily.

The protein resides in the cytoplasm. It carries out the reaction L-homoserine + ATP = O-phospho-L-homoserine + ADP + H(+). Its pathway is amino-acid biosynthesis; L-threonine biosynthesis; L-threonine from L-aspartate: step 4/5. Its function is as follows. Catalyzes the ATP-dependent phosphorylation of L-homoserine to L-homoserine phosphate. The sequence is that of Homoserine kinase from Shigella flexneri serotype 5b (strain 8401).